Consider the following 166-residue polypeptide: Protein UL5 (166 aa).

As to quaternary structure, interacts with host IQGAP1.

The protein resides in the host cytoplasm. May play a role in rearrangement of cellular cytoskeleton towards an efficient viral assembly and spreading. The protein is Protein UL5 (UL5) of Human cytomegalovirus (strain Merlin) (HHV-5).